The following is a 677-amino-acid chain: MAAHHRQNTAGRRKVQVSYVIRDEVEKYNRNGVNALQLDPALNRLFTAGRDSIIRIWSVNQHKQDPYIASMEHHTDWVNDIVLCCNGKTLISASSDTTVKVWNAHKGFCMSTLRTHKDYVKALAYAKDKELVASAGLDRQIFLWDVNTLTALTASNNTVTTSSLSGNKDSIYSLAMNQLGTIIVSGSTEKVLRVWDPRTCAKLMKLKGHTDNVKALLLNRDGTQCLSGSSDGTIRLWSLGQQRCIATYRVHDEGVWALQVNDAFTHVYSGGRDRKIYCTDLRNPDIRVLICEEKAPVLKMELDRSADPPPAIWVATTKSTVNKWTLKGIHNFRASGDYDNDCTNPITPLCTQPDQVIKGGASIIQCHILNDKRHILTKDTNNNVAYWDVLKACKVEDLGKVDFEDEIKKRFKMVYVPNWFSVDLKTGMLTITLDESDCFAAWVSAKDAGFSSPDGSDPKLNLGGLLLQALLEYWPRTHVNPMDEEENEVNHVNGEQENRVQKGNGYFQVPPHTPVIFGEAGGRTLFRLLCRDSGGETESMLLNETVPQWVIDITVDKNMPKFNKIPFYLQPHASSGAKTLKKDRLSASDMLQVRKVMEHVYEKIINLDNESQTTSSSNNEKPGEQEKEEDIAVLAEEKIELLCQDQVLDPNMDLRTVKHFIWKSGGDLTLHYRQKST.

Y28 is modified (phosphotyrosine). WD repeat units follow at residues 28–67, 73–112, 115–154, 166–205, 208–247, 250–289, 292–334, and 358–397; these read YNRN…QDPY, HHTD…CMST, THKD…ALTA, GNKD…KLMK, GHTD…CIAT, VHDE…IRVL, EEKA…NFRA, and KGGA…KVED. Residue K214 is modified to N6-acetyllysine. Residue K578 is modified to N6-acetyllysine. A disordered region spans residues 607-628; that stretch reads LDNESQTTSSSNNEKPGEQEKE. Over residues 609-620 the composition is skewed to low complexity; sequence NESQTTSSSNNE. T613 carries the post-translational modification Phosphothreonine.

Belongs to the WD repeat WDR48 family. As to quaternary structure, interacts with USP46. Interacts with USP1. Interacts with USP12. Component of the USP12-WDR20-WDR48 deubiquitinating complex. Component of the USP12-DMWD-WDR48 deubiquitinating complex. Interacts with PHLPP1. Interacts with RAD51AP1; the interaction is direct and promotes formation of a trimeric complex with RAD51 via RAD51AP1. Interacts with ATAD5; the interaction regulates USP1-mediated PCNA deubiquitination. Interacts with RAD51; the interaction is enhanced under replication stress. Interacts with ITCH; the interaction is more efficient when both USP12 and WDR48/UAF1 are involved and may facilitate recruitment of the USP12 deubiquitinating complex to Notch. (Microbial infection) Interacts with papillomavirus HPV11 E1 protein. In terms of assembly, (Microbial infection) Interacts with Saimiriine herpesvirus TIP protein. As to quaternary structure, (Microbial infection) Interacts with human cytomegalovirus protein UL138. (Microbial infection) Interacts with Epstein-Barr virus protein EBNA3. Ubiquitous.

It localises to the nucleus. The protein resides in the cytoplasm. Its subcellular location is the lysosome. The protein localises to the late endosome. Functionally, regulator of deubiquitinating complexes, which acts as a strong activator of USP1, USP12 and USP46. Enhances the USP1-mediated deubiquitination of FANCD2; USP1 being almost inactive by itself. Activates deubiquitination by increasing the catalytic turnover without increasing the affinity of deubiquitinating enzymes for the substrate. Also activates deubiquitinating activity of complexes containing USP12. In complex with USP12, acts as a potential tumor suppressor by positively regulating PHLPP1 stability. Docks at the distal end of the USP12 fingers domain and induces a cascade of structural changes leading to the activation of the enzyme. Together with RAD51AP1, promotes DNA repair by stimulating RAD51-mediated homologous recombination. Binds single-stranded DNA (ssDNA) and double-stranded DNA (dsDNA). DNA-binding is required both for USP1-mediated deubiquitination of FANCD2 and stimulation of RAD51-mediated homologous recombination: both WDR48/UAF1 and RAD51AP1 have coordinated role in DNA-binding during these processes. Together with ATAD5 and by regulating USP1 activity, has a role in PCNA-mediated translesion synthesis (TLS) by deubiquitinating monoubiquitinated PCNA. Together with ATAD5, has a role in recruiting RAD51 to stalled forks during replication stress. Its function is as follows. (Microbial infection) In case of infection by Herpesvirus saimiri, may play a role in vesicular transport or membrane fusion events necessary for transport to lysosomes. Induces lysosomal vesicle formation via interaction with Herpesvirus saimiri tyrosine kinase-interacting protein (TIP). Subsequently, TIP recruits tyrosine-protein kinase LCK, resulting in down-regulation of T-cell antigen receptor TCR. May play a role in generation of enlarged endosomal vesicles via interaction with TIP. In case of infection by papillomavirus HPV11, promotes the maintenance of the viral genome via its interaction with HPV11 helicase E1. The chain is WD repeat-containing protein 48 from Homo sapiens (Human).